The primary structure comprises 117 residues: Large ribosomal subunit protein bL20 (117 aa).

This sequence belongs to the bacterial ribosomal protein bL20 family.

Binds directly to 23S ribosomal RNA and is necessary for the in vitro assembly process of the 50S ribosomal subunit. It is not involved in the protein synthesizing functions of that subunit. The protein is Large ribosomal subunit protein bL20 of Solidesulfovibrio magneticus (strain ATCC 700980 / DSM 13731 / RS-1) (Desulfovibrio magneticus).